The primary structure comprises 152 residues: Large ribosomal subunit protein bL9 (152 aa).

This sequence belongs to the bacterial ribosomal protein bL9 family.

Binds to the 23S rRNA. The sequence is that of Large ribosomal subunit protein bL9 from Prochlorococcus marinus (strain MIT 9211).